Consider the following 303-residue polypeptide: Acetaldehyde dehydrogenase (303 aa).

Residue serine 13–isoleucine 16 coordinates NAD(+). Cysteine 128 functions as the Acyl-thioester intermediate in the catalytic mechanism. NAD(+) is bound by residues serine 159–asparagine 167 and asparagine 278.

This sequence belongs to the acetaldehyde dehydrogenase family.

It catalyses the reaction acetaldehyde + NAD(+) + CoA = acetyl-CoA + NADH + H(+). The protein is Acetaldehyde dehydrogenase of Chloroflexus aggregans (strain MD-66 / DSM 9485).